The primary structure comprises 179 residues: O-acetyl-ADP-ribose deacetylase (179 aa).

The 175-residue stretch at 1 to 175 (MTSRLQVIQG…LYARLLTQQG (175 aa)) folds into the Macro domain. Residues 11 to 12 (DI), asparagine 25, 33 to 35 (GVD), and 122 to 126 (STGVY) contribute to the substrate site. The active-site Proton acceptor is aspartate 35.

Belongs to the MacroD-type family. YmdB subfamily. Homodimer. Interacts with RNase III.

The enzyme catalyses 3''-O-acetyl-ADP-D-ribose + H2O = ADP-D-ribose + acetate + H(+). It catalyses the reaction 2''-O-acetyl-ADP-D-ribose + H2O = ADP-D-ribose + acetate + H(+). Functionally, deacetylates O-acetyl-ADP ribose to yield ADP-ribose and free acetate. Down-regulates ribonuclease 3 (RNase III) activity. Acts by interacting directly with the region of the ribonuclease that is required for dimerization/activation. The chain is O-acetyl-ADP-ribose deacetylase from Salmonella typhi.